Consider the following 1050-residue polypeptide: Self-sufficient cytochrome P450 monooxygenase CYP505E5 (1050 aa).

C405 contacts heme. The tract at residues 467–491 (RRSMLVARDGSSGESSNHLAEARGD) is disordered. In terms of domain architecture, Flavodoxin-like spans 500-641 (VSFFYGSNSG…DLEAWEETSL (142 aa)). FMN contacts are provided by residues 506-510 (SNSGT) and 585-617 (VFGC…TRLA). In terms of domain architecture, FAD-binding FR-type spans 679–907 (KGLIEAKVTA…RPAKESFHLP (229 aa)).

In the N-terminal section; belongs to the cytochrome P450 family. It depends on FAD as a cofactor. FMN serves as cofactor. The cofactor is heme.

It catalyses the reaction 2 oxidized [cytochrome P450] + NADPH = 2 reduced [cytochrome P450] + NADP(+) + H(+). The enzyme catalyses an organic molecule + reduced [NADPH--hemoprotein reductase] + O2 = an alcohol + oxidized [NADPH--hemoprotein reductase] + H2O + H(+). The catalysed reaction is dodecanoate + reduced [NADPH--hemoprotein reductase] + O2 = 5-hydroxydodecanoate + oxidized [NADPH--hemoprotein reductase] + H2O + H(+). It carries out the reaction tetradecanoate + reduced [NADPH--hemoprotein reductase] + O2 = 7-hydroxytetradecanoate + oxidized [NADPH--hemoprotein reductase] + H2O + H(+). It catalyses the reaction dodecan-1-ol + reduced [NADPH--hemoprotein reductase] + O2 = 1,5-dodecanediol + oxidized [NADPH--hemoprotein reductase] + H2O + H(+). The enzyme catalyses dodecan-1-ol + reduced [NADPH--hemoprotein reductase] + O2 = 1,4-dodecanediol + oxidized [NADPH--hemoprotein reductase] + H2O + H(+). The catalysed reaction is dodecan-1-ol + reduced [NADPH--hemoprotein reductase] + O2 = 1,6-dodecanediol + oxidized [NADPH--hemoprotein reductase] + H2O + H(+). In terms of biological role, self-sufficient cytochrome P450 monooxygenase that catalyzes the regioselective in-chain hydroxylation of alkanes, fatty alcohols, and fatty acids at the omega-7 position. Performs hydroxylation of C10-C16 n-alkanes and C12 and C14 fatty alcohols; and thereby enables the one step biocatalytic synthesis of rare alcohols such as 5-dodecanol and 7-tetradecanol. Converts 1-dodecanol into 1,5-dodecanediol as major product with very little sub-terminally hydroxylated products with the 1,4-dodecanediol and 1,6-dodecanediol more abundant. Converts dodecanoic acid to 5-hydroxydodecanoic acid which can be further converted into delta-dodecalactone by lactonization of the 5-hydroxy acid at low pH. Also gives sub-terminal hydroxylation of dodecanoic acid with 9-hydroxydodecanoic acid being the second most abundant product. In Aspergillus niger, this protein is Self-sufficient cytochrome P450 monooxygenase CYP505E5.